The chain runs to 220 residues: GTP cyclohydrolase 1 (220 aa).

Residues cysteine 113, histidine 116, and cysteine 184 each coordinate Zn(2+).

It belongs to the GTP cyclohydrolase I family. As to quaternary structure, homomer.

It catalyses the reaction GTP + H2O = 7,8-dihydroneopterin 3'-triphosphate + formate + H(+). It functions in the pathway cofactor biosynthesis; 7,8-dihydroneopterin triphosphate biosynthesis; 7,8-dihydroneopterin triphosphate from GTP: step 1/1. The protein is GTP cyclohydrolase 1 of Hamiltonella defensa subsp. Acyrthosiphon pisum (strain 5AT).